The sequence spans 440 residues: Transposon Ty1-OL Gag polyprotein (440 aa).

Composition is skewed to polar residues over residues Met1–Ser23, Thr48–Ser60, and Gln127–Phe152. 3 disordered regions span residues Met1–Gln93, Pro126–Pro173, and Gly352–Tyr440. Positions Thr153–Thr165 are enriched in low complexity. An RNA-binding region spans residues Asn299–His401. The segment covering Asn402–Ser418 has biased composition (low complexity). Ser416 carries the post-translational modification Phosphoserine. Residues Lys419–Asn428 are compositionally biased toward polar residues. The segment covering Asn429–Tyr440 has biased composition (basic and acidic residues).

Homotrimer.

It localises to the cytoplasm. Capsid protein (CA) is the structural component of the virus-like particle (VLP), forming the shell that encapsulates the retrotransposons dimeric RNA genome. The particles are assembled from trimer-clustered units and there are holes in the capsid shells that allow for the diffusion of macromolecules. CA also has nucleocapsid-like chaperone activity, promoting primer tRNA(i)-Met annealing to the multipartite primer-binding site (PBS), dimerization of Ty1 RNA and initiation of reverse transcription. The sequence is that of Transposon Ty1-OL Gag polyprotein (TY1A-OL) from Saccharomyces cerevisiae (strain ATCC 204508 / S288c) (Baker's yeast).